The following is a 156-amino-acid chain: Small ribosomal subunit protein uS7 (156 aa).

This sequence belongs to the universal ribosomal protein uS7 family. Part of the 30S ribosomal subunit. Contacts proteins S9 and S11.

In terms of biological role, one of the primary rRNA binding proteins, it binds directly to 16S rRNA where it nucleates assembly of the head domain of the 30S subunit. Is located at the subunit interface close to the decoding center, probably blocks exit of the E-site tRNA. The protein is Small ribosomal subunit protein uS7 of Lachnospira eligens (strain ATCC 27750 / DSM 3376 / VPI C15-48 / C15-B4) (Eubacterium eligens).